We begin with the raw amino-acid sequence, 571 residues long: E3 ubiquitin-protein ligase RNF168 (571 aa).

The segment at 16–55 (CGICMEILVEPVTLPCNHTLCKPCFQSTVEKASLCCPFCR) adopts an RING-type zinc-finger fold. Ser70 carries the phosphoserine modification. The LR motif 1 signature appears at 110 to 128 (LSKPGELRREYEEEISKVA). Ser134 carries the phosphoserine modification. Positions 143 to 151 (EEYIQRLLA) match the UMI motif motif. Disordered regions lie at residues 151-174 (AEEE…QLKS) and 191-292 (EGSI…GADS). The short motif at 168–191 (MEEQLKSDEELARKLSIDINNFCE) is the MIU motif 1 element. The residue at position 197 (Ser197) is a Phosphoserine. Over residues 202-214 (RKSDPVTPKSEKK) the composition is skewed to basic and acidic residues. Lys210 participates in a covalent cross-link: Glycyl lysine isopeptide (Lys-Gly) (interchain with G-Cter in SUMO2). Polar residues predominate over residues 231–242 (PKSQFGSASHSE). Residues 243–263 (AVQEVRKDSVSKDIDSSDRKS) are compositionally biased toward basic and acidic residues. Thr362 bears the Phosphothreonine mark. 2 disordered regions span residues 390–422 (NQES…EETE) and 459–560 (KEQM…ISQK). 3 positions are modified to phosphoserine: Ser411, Ser414, and Ser415. Positions 439 to 462 (RHKQEEQDRLLALQLQKEVDKEQM) match the MIU motif 2 motif. The LR motif 2 motif lies at 466–477 (RQKGSPDEYHLR). Position 470 is a phosphoserine (Ser470). Residues 508–519 (PTPERGSRDKNR) are compositionally biased toward basic and acidic residues. 2 stretches are compositionally biased toward polar residues: residues 520-530 (QVSLKMQLKQS) and 549-560 (SAHSLQPSISQK). Residue Lys528 forms a Glycyl lysine isopeptide (Lys-Gly) (interchain with G-Cter in SUMO2) linkage.

The protein belongs to the RNF168 family. Monomer. Interacts with UBE2N/UBC13. Sumoylated with SUMO1 by PIAS4 in response to double-strand breaks (DSBs). Post-translationally, ubiquitinated.

The protein resides in the nucleus. It catalyses the reaction S-ubiquitinyl-[E2 ubiquitin-conjugating enzyme]-L-cysteine + [acceptor protein]-L-lysine = [E2 ubiquitin-conjugating enzyme]-L-cysteine + N(6)-ubiquitinyl-[acceptor protein]-L-lysine.. The protein operates within protein modification; protein ubiquitination. E3 ubiquitin-protein ligase required for accumulation of repair proteins to sites of DNA damage. Acts with UBE2N/UBC13 to amplify the RNF8-dependent histone ubiquitination. Recruited to sites of DNA damage at double-strand breaks (DSBs) by binding to ubiquitinated histone H2A and H2AX and amplifies the RNF8-dependent H2A ubiquitination, promoting the formation of 'Lys-63'-linked ubiquitin conjugates. This leads to concentrate ubiquitinated histones H2A and H2AX at DNA lesions to the threshold required for recruitment of TP53BP1 and BRCA1. Also recruited at DNA interstrand cross-links (ICLs) sites and promotes accumulation of 'Lys-63'-linked ubiquitination of histones H2A and H2AX, leading to recruitment of FAAP20/C1orf86 and Fanconi anemia (FA) complex, followed by interstrand cross-link repair. H2A ubiquitination also mediates the ATM-dependent transcriptional silencing at regions flanking DSBs in cis, a mechanism to avoid collision between transcription and repair intermediates. Also involved in class switch recombination in immune system, via its role in regulation of DSBs repair. Following DNA damage, promotes the ubiquitination and degradation of JMJD2A/KDM4A in collaboration with RNF8, leading to unmask H4K20me2 mark and promote the recruitment of TP53BP1 at DNA damage sites. Not able to initiate 'Lys-63'-linked ubiquitination in vitro; possibly due to partial occlusion of the UBE2N/UBC13-binding region. Catalyzes monoubiquitination of 'Lys-13' and 'Lys-15' of nucleosomal histone H2A (H2AK13Ub and H2AK15Ub, respectively). This Homo sapiens (Human) protein is E3 ubiquitin-protein ligase RNF168.